A 345-amino-acid chain; its full sequence is D-apiose dehydrogenase (345 aa).

15–16 (FF) is a binding site for NAD(+). Trp-24, Lys-25, Val-27, and Ala-30 together coordinate Mg(2+). NAD(+) is bound by residues Asp-37, Ser-79, 97 to 98 (QK), Asn-126, and 165 to 167 (QPY). Lys-98 provides a ligand contact to substrate. Positions 165, 178, 182, and 232 each coordinate substrate.

Belongs to the Gfo/Idh/MocA family.

The enzyme catalyses D-apiofuranose + NAD(+) = D-apionolactone + NADH + H(+). Its pathway is carbohydrate metabolism. Its function is as follows. Involved in catabolism of D-apiose. Catalyzes oxidation of D-apiose to D-apionolactone. The polypeptide is D-apiose dehydrogenase (Rhizobium rhizogenes (strain K84 / ATCC BAA-868) (Agrobacterium radiobacter)).